A 104-amino-acid chain; its full sequence is Small ribosomal subunit protein uS10 (104 aa).

It belongs to the universal ribosomal protein uS10 family. In terms of assembly, part of the 30S ribosomal subunit.

Involved in the binding of tRNA to the ribosomes. In Dichelobacter nodosus (strain VCS1703A), this protein is Small ribosomal subunit protein uS10.